Reading from the N-terminus, the 433-residue chain is Divalent metal cation transporter MntH (433 aa).

Helical transmembrane passes span 32-52 (LIFAGPAVVASIAYMDPGNFA), 62-82 (GYDLLWVVLLASLIAMLFQGL), 101-121 (TLPPALTIPMWIISEIAAMAT), 131-151 (IGIALLAHLPLMAGMAITGIV), 168-188 (LVIGALVGVIALCYLAELLIV), 209-229 (ALTIAVGIVGATVMPHALFLH), 256-276 (VLAALGVAGMVNMAMVAMAAG), 296-316 (SPLLGAGAAVIFLISLLASGV), 345-365 (ALTMIPGFVVIGLGVNPTRAL), 366-386 (VLSQVVLSLALPVPMLALLWF), and 401-421 (ITAIAAIGGAIVILGLNVILL).

This sequence belongs to the NRAMP family.

It localises to the cell inner membrane. H(+)-stimulated, divalent metal cation uptake system. The protein is Divalent metal cation transporter MntH of Acidiphilium cryptum (strain JF-5).